The primary structure comprises 942 residues: Zinc finger protein 865 (942 aa).

Residues 66 to 106 (FASTSTSKPKEFKVEAPPSSSLSPSKKPDIATTQQFNNQPP) are disordered. Polar residues predominate over residues 96 to 106 (ATTQQFNNQPP). 20 C2H2-type zinc fingers span residues 172 to 194 (FPCTVCQKSFKQSSHLVQHMLVH), 200 to 222 (YECNTCGRTYNHISSLIRHRRCH), 282 to 304 (FTCTLCWKVFKKQSHLHQHQIIH), 310 to 332 (FSCSVCAKSFNRRESLKRHVKTH), 338 to 360 (VQCEVCGKSFRDTSYLLKHQATH), 367 to 389 (YKCELCGKSYAAPQSLLRHKQVH), 466 to 488 (FCCNVCGRGFGRRETLKRHERIH), 494 to 516 (HQCSVCGKRFRESFHLTKHHVVH), 522 to 544 (YKCELCGKVFGYPQSLTRHKQIH), 564 to 586 (FGCTDCGERFPDSFHLMNHKELH), 592 to 614 (YVCDTCGKCFGFIENLMWHKLVH), 678 to 700 (FSCSICGQSFKHFLGLVTHKYVH), 706 to 728 (LACNVCGQNFAGAYDLLLHRRTH), 734 to 756 (FTCSVCGKRFWEAALLMRHQRCH), 762 to 784 (YRCTICGRGFLHSWYLRQHKVVH), 790 to 812 (YKCALCNKRFAQSSSLAEHQRLH), 818 to 840 (QRCPTCGKTFRYRSNLLEHQRVH), 846 to 868 (YRCDQCGKSFFYISSILRHQRSH), 874 to 896 (LRCSCCLKLFKDPKYFSKHVQTH), and 902 to 924 (FKCGACGEAFSNTYGLKKHRHAH).

The protein belongs to the krueppel C2H2-type zinc-finger protein family.

Its subcellular location is the nucleus. In terms of biological role, may be involved in transcriptional regulation. This chain is Zinc finger protein 865 (znf865), found in Xenopus tropicalis (Western clawed frog).